The primary structure comprises 175 residues: Two-on-two hemoglobin-3 (175 aa).

Residues Tyr-85 and His-98 each coordinate heme. Residues 153–175 are disordered; the sequence is QNEKPKHKPQCACKHAANKPAEE.

The protein belongs to the truncated hemoglobin family. Group II subfamily. Homodimer when ferric. Interacts with RGLG3 and RGLG4. The cofactor is heme. In terms of tissue distribution, expressed ubiquitously, with higher levels in root tissue than in shoot tissue.

Hemoglobin-like protein that exhibits an unusual concentration-independent binding of O(2) and CO. May promote shoot organogenesis from root explants in vitro. Inhibits RGLG3 and RGLG4 ubiquitination activity. The protein is Two-on-two hemoglobin-3 (GLB3) of Arabidopsis thaliana (Mouse-ear cress).